The primary structure comprises 138 residues: Small ribosomal subunit protein uS11c (138 aa).

The interval 1–23 (MAKPILRIGSRKNTRSGSRKNVR) is disordered. The segment covering 9-23 (GSRKNTRSGSRKNVR) has biased composition (basic residues).

Belongs to the universal ribosomal protein uS11 family. Part of the 30S ribosomal subunit.

The protein localises to the plastid. It is found in the chloroplast. This chain is Small ribosomal subunit protein uS11c, found in Crucihimalaya wallichii (Rock-cress).